A 62-amino-acid polypeptide reads, in one-letter code: Large ribosomal subunit protein uL30 (62 aa).

Belongs to the universal ribosomal protein uL30 family. Part of the 50S ribosomal subunit.

The chain is Large ribosomal subunit protein uL30 from Thioalkalivibrio sulfidiphilus (strain HL-EbGR7).